A 65-amino-acid chain; its full sequence is U11-theraphotoxin-Cg1a (65 aa).

A signal peptide spans 1 to 21; sequence MKTTILLVILGLTLLFALSAA. The propeptide occupies 22 to 29; the sequence is TELKDEER. 3 cysteine pairs are disulfide-bonded: C31/C45, C38/C50, and C44/C57.

The protein belongs to the neurotoxin 10 (Hwtx-1) family. 32 (Jztx-16) subfamily. Expressed by the venom gland.

The protein resides in the secreted. Its function is as follows. Probable ion channel inhibitor. The sequence is that of U11-theraphotoxin-Cg1a from Chilobrachys guangxiensis (Chinese earth tiger tarantula).